Here is a 241-residue protein sequence, read N- to C-terminus: MSTVLTYIRAVDIYEHMTESLDLEFESAYRGESVAFGEGVRPPWSIGEPQPELAALIVQGKFRGDVLDVGCGEAAISLALAERGHTTVGLDLSPAAVELARHEAAKRGLANASFEVADASSFTGYDGRFDTIVDSTLFHSMPVESREGYLQSIVRAAAPGASYFVLVFDRAAIPEGPINAVTEDELRAAVSKYWIIDEIKPARLYARFPAGFAGMPALLDIREEPNGLQSIGGWLLSAHLG.

The protein belongs to the methyltransferase superfamily. As to quaternary structure, monomer.

The protein localises to the cytoplasm. It carries out the reaction 2-heptyl-1-hydroxy-4(1H)-quinolinone + S-adenosyl-L-methionine = 2-heptyl-1-methoxy-4(1H)-quinolinone + S-adenosyl-L-homocysteine + H(+). Its function is as follows. Involved in cellular response to chemical stress and may contribute to resistance toward antimicrobial natural compounds as well as drugs. Catalyzes the methylation and detoxification of the P.aeruginosa toxin 2-heptyl-1-hydroxy-4(1H)-quinolinone (HQNO) to 2-heptyl-1-methoxy-4(1H)-quinolinone (HMOQ). This Mycobacterium bovis (strain BCG / Pasteur 1173P2) protein is 2-heptyl-1-hydroxyquinolin-4(1H)-one methyltransferase.